Here is a 217-residue protein sequence, read N- to C-terminus: Thiamine-phosphate synthase (217 aa).

4-amino-2-methyl-5-(diphosphooxymethyl)pyrimidine is bound by residues 39–43 and asparagine 71; that span reads QLRRK. Positions 72 and 91 each coordinate Mg(2+). Residue serine 110 participates in 4-amino-2-methyl-5-(diphosphooxymethyl)pyrimidine binding. 137–139 contributes to the 2-[(2R,5Z)-2-carboxy-4-methylthiazol-5(2H)-ylidene]ethyl phosphate binding site; it reads SPT. Lysine 140 serves as a coordination point for 4-amino-2-methyl-5-(diphosphooxymethyl)pyrimidine. 2-[(2R,5Z)-2-carboxy-4-methylthiazol-5(2H)-ylidene]ethyl phosphate-binding positions include glycine 173 and 193–194; that span reads IS.

It belongs to the thiamine-phosphate synthase family. Mg(2+) is required as a cofactor.

The enzyme catalyses 2-[(2R,5Z)-2-carboxy-4-methylthiazol-5(2H)-ylidene]ethyl phosphate + 4-amino-2-methyl-5-(diphosphooxymethyl)pyrimidine + 2 H(+) = thiamine phosphate + CO2 + diphosphate. The catalysed reaction is 2-(2-carboxy-4-methylthiazol-5-yl)ethyl phosphate + 4-amino-2-methyl-5-(diphosphooxymethyl)pyrimidine + 2 H(+) = thiamine phosphate + CO2 + diphosphate. It catalyses the reaction 4-methyl-5-(2-phosphooxyethyl)-thiazole + 4-amino-2-methyl-5-(diphosphooxymethyl)pyrimidine + H(+) = thiamine phosphate + diphosphate. It functions in the pathway cofactor biosynthesis; thiamine diphosphate biosynthesis; thiamine phosphate from 4-amino-2-methyl-5-diphosphomethylpyrimidine and 4-methyl-5-(2-phosphoethyl)-thiazole: step 1/1. Its function is as follows. Condenses 4-methyl-5-(beta-hydroxyethyl)thiazole monophosphate (THZ-P) and 2-methyl-4-amino-5-hydroxymethyl pyrimidine pyrophosphate (HMP-PP) to form thiamine monophosphate (TMP). The protein is Thiamine-phosphate synthase of Bordetella bronchiseptica (strain ATCC BAA-588 / NCTC 13252 / RB50) (Alcaligenes bronchisepticus).